Reading from the N-terminus, the 392-residue chain is Heat-inducible transcription repressor HrcA (392 aa).

The protein belongs to the HrcA family.

Its function is as follows. Negative regulator of class I heat shock genes (grpE-dnaK-dnaJ and groELS operons). Prevents heat-shock induction of these operons. The sequence is that of Heat-inducible transcription repressor HrcA from Synechococcus sp. (strain JA-3-3Ab) (Cyanobacteria bacterium Yellowstone A-Prime).